Here is a 162-residue protein sequence, read N- to C-terminus: NADH-quinone oxidoreductase subunit C (162 aa).

This sequence belongs to the complex I 30 kDa subunit family. In terms of assembly, NDH-1 is composed of 14 different subunits. Subunits NuoB, C, D, E, F, and G constitute the peripheral sector of the complex.

Its subcellular location is the cell inner membrane. It carries out the reaction a quinone + NADH + 5 H(+)(in) = a quinol + NAD(+) + 4 H(+)(out). NDH-1 shuttles electrons from NADH, via FMN and iron-sulfur (Fe-S) centers, to quinones in the respiratory chain. The immediate electron acceptor for the enzyme in this species is believed to be ubiquinone. Couples the redox reaction to proton translocation (for every two electrons transferred, four hydrogen ions are translocated across the cytoplasmic membrane), and thus conserves the redox energy in a proton gradient. This Geobacter metallireducens (strain ATCC 53774 / DSM 7210 / GS-15) protein is NADH-quinone oxidoreductase subunit C.